We begin with the raw amino-acid sequence, 88 residues long: Putative transmembrane protein ORF24 (88 aa).

3 consecutive transmembrane segments (helical) span residues 16-36, 42-62, and 64-84; these read LNMGLALLLATIMVMILWAGM, AVFVIWALTSITLIFTFVTQF, and FIWFWVMVMLSLLLISIVASI.

Its subcellular location is the host membrane. The chain is Putative transmembrane protein ORF24 from Haloarcula hispanica (His1V).